The following is a 133-amino-acid chain: Histone H2A.1 (133 aa).

The segment at 1 to 23 is disordered; sequence MSTTGKGGKAKGKTASSKQVSRS. The residue at position 2 (Ser-2) is an N-acetylserine. 5 positions are modified to N6-acetyllysine: Lys-6, Lys-9, Lys-11, Lys-13, and Lys-18. Position 123 is a phosphoserine (Ser-123). Lys-124 is covalently cross-linked (Glycyl lysine isopeptide (Lys-Gly) (interchain with G-Cter in ubiquitin)). Position 129 is a phosphoserine (Ser-129).

This sequence belongs to the histone H2A family. As to quaternary structure, the nucleosome is a histone octamer containing two molecules each of H2A, H2B, H3 and H4 assembled in one H3-H4 heterotetramer and two H2A-H2B heterodimers. The octamer wraps approximately 147 bp of DNA. In terms of processing, monoubiquitination of Lys-124 gives a specific tag for epigenetic transcriptional repression. Acetylation occurs almost exclusively in the MAC.

It is found in the nucleus. It localises to the chromosome. Functionally, core component of nucleosome. Nucleosomes wrap and compact DNA into chromatin, limiting DNA accessibility to the cellular machineries which require DNA as a template. Histones thereby play a central role in transcription regulation, DNA repair, DNA replication and chromosomal stability. DNA accessibility is regulated via a complex set of post-translational modifications of histones, also called histone code, and nucleosome remodeling. The polypeptide is Histone H2A.1 (HTA2) (Tetrahymena pyriformis).